Consider the following 389-residue polypeptide: Glutamate 5-kinase (389 aa).

Residue Lys26 coordinates ATP. Substrate-binding residues include Ser66, Asp153, and Asn167. Residue 187-188 (TD) coordinates ATP. Residues 293-371 (AGTLFLDQGA…EQIEWILGHR (79 aa)) enclose the PUA domain.

Belongs to the glutamate 5-kinase family.

Its subcellular location is the cytoplasm. The enzyme catalyses L-glutamate + ATP = L-glutamyl 5-phosphate + ADP. The protein operates within amino-acid biosynthesis; L-proline biosynthesis; L-glutamate 5-semialdehyde from L-glutamate: step 1/2. In terms of biological role, catalyzes the transfer of a phosphate group to glutamate to form L-glutamate 5-phosphate. This is Glutamate 5-kinase from Rhodopirellula baltica (strain DSM 10527 / NCIMB 13988 / SH1).